The following is a 982-amino-acid chain: Chromosome partition protein Smc (982 aa).

33–40 (PNGSGKSN) is a binding site for ATP. Coiled-coil stretches lie at residues 171–235 (RYTK…LVAD) and 263–377 (QLQL…NLNQ). Residues 416-535 (TGLLNTLNTF…ASDLQAALKL (120 aa)) form the SMC hinge domain. 3 coiled-coil regions span residues 568-627 (LSLY…ERVN), 669-713 (AERD…RSQL), and 753-818 (IKLS…EIDE).

It belongs to the SMC family. In terms of assembly, homodimer.

The protein localises to the cytoplasm. Its function is as follows. Required for chromosome condensation and partitioning. The polypeptide is Chromosome partition protein Smc (Mycoplasma pneumoniae (strain ATCC 29342 / M129 / Subtype 1) (Mycoplasmoides pneumoniae)).